The following is an 80-amino-acid chain: Lantibiotic Flvalpha.a (80 aa).

Positions 1–38 are cleaved as a propeptide — cleaved by FlvT; that stretch reads MNKNPIYRSEEEAKDIACGNVAAELDENSQALDAINGA. A 2,3-didehydrobutyrine; by FlvM1 mark is found at Thr43 and Thr47. A cross-link (beta-methyllanthionine (Thr-Cys); by FlvM1) is located at residues 52–55; it reads TVGC. The lanthionine (Ser-Cys); by FlvM1 cross-link spans 58 to 68; it reads SYGLGNGGYCC. 2 consecutive cross-links (beta-methyllanthionine (Thr-Cys); by FlvM1) follow at residues 69–74 and 71–78; these read TYTVEC and TVECSKTC.

In terms of processing, the lanthionine formed by Ser-58 and Cys-68 forms a putative lipid II binding motif. Post-translationally, maturation of FlvA1 peptides involves the enzymatic conversion of Thr, and Ser into dehydrated AA and the formation of thioether bonds with cysteines. Modifications are processed by the flavecin synthetase FlvM1. This is followed by membrane translocation and cleavage of the modified precursor. Contains DL-lanthionine and DL-beta-methyllanthionine, when coepressed in E.coli with the flavecin synthetase FlvM1.

The protein localises to the secreted. In terms of biological role, lanthionine-containing peptide antibiotic (lantibiotic) only active on Gram-positive bacteria in synergy with Flvbeta peptides, which are encoded by the same operon than Flvalpha.a. Shows antibacterial activity in synergy with Flvbeta.b, Flvbeta.c, Flvbeta.e and Flvbeta.g. Does not show antibacterial activity when tested with Flvbeta.a, Flvbeta.d, Flvbeta.f and Flvbeta.h. The bactericidal activity of lantibiotics is based on depolarization of energized bacterial cytoplasmic membranes, initiated by the formation of aqueous transmembrane pores. The sequence is that of Lantibiotic Flvalpha.a from Ruminococcus flavefaciens.